A 375-amino-acid chain; its full sequence is Alcohol dehydrogenase 1 (375 aa).

S2 is modified (N-acetylserine). Zn(2+) contacts are provided by C47, H68, C98, C101, C104, C112, and C175. Residues 200–205 (WSGRVG), D224, and K229 contribute to the NAD(+) site. The residue at position 234 (K234) is an N6-succinyllysine. 293 to 295 (VGV) lines the NAD(+) pocket. K340 carries the post-translational modification N6-succinyllysine. R370 lines the NAD(+) pocket.

The protein belongs to the zinc-containing alcohol dehydrogenase family. Class-I subfamily. In terms of assembly, homodimer. The cofactor is Zn(2+).

The protein localises to the cytoplasm. It catalyses the reaction a primary alcohol + NAD(+) = an aldehyde + NADH + H(+). The enzyme catalyses a secondary alcohol + NAD(+) = a ketone + NADH + H(+). This chain is Alcohol dehydrogenase 1 (ADH1), found in Geomys bursarius (Plains pocket gopher).